The sequence spans 434 residues: Serine hydroxymethyltransferase (434 aa).

(6S)-5,6,7,8-tetrahydrofolate is bound by residues Leu128 and 132-134 (GHL). Lys237 carries the N6-(pyridoxal phosphate)lysine modification.

The protein belongs to the SHMT family. As to quaternary structure, homodimer. Requires pyridoxal 5'-phosphate as cofactor.

The protein localises to the cytoplasm. The enzyme catalyses (6R)-5,10-methylene-5,6,7,8-tetrahydrofolate + glycine + H2O = (6S)-5,6,7,8-tetrahydrofolate + L-serine. Its pathway is one-carbon metabolism; tetrahydrofolate interconversion. It functions in the pathway amino-acid biosynthesis; glycine biosynthesis; glycine from L-serine: step 1/1. Functionally, catalyzes the reversible interconversion of serine and glycine with tetrahydrofolate (THF) serving as the one-carbon carrier. This reaction serves as the major source of one-carbon groups required for the biosynthesis of purines, thymidylate, methionine, and other important biomolecules. Also exhibits THF-independent aldolase activity toward beta-hydroxyamino acids, producing glycine and aldehydes, via a retro-aldol mechanism. The chain is Serine hydroxymethyltransferase from Corynebacterium efficiens (strain DSM 44549 / YS-314 / AJ 12310 / JCM 11189 / NBRC 100395).